The following is a 517-amino-acid chain: Meiosis-specific transcription factor mei4 (517 aa).

Residues 81–172 constitute a DNA-binding region (fork-head); it reads KPPCSYATLI…QNFVSVRLHR (92 aa). Residues 170–278 form a disordered region; it reads LHRSHSTDSN…PNAETQEDLP (109 aa). The span at 209–223 shows a compositional bias: low complexity; sequence NSFNSSTSTSGSSSN. Over residues 230–246 the composition is skewed to polar residues; that stretch reads NDASQPSNQDSSLNSNI. Residues 254–270 are compositionally biased toward low complexity; it reads SNVQSNSSSSENVPKPN.

The protein resides in the nucleus. Its function is as follows. Functions as a meiosis-specific transcription factor. Binds to the 5'-GTAAAYA-3' consensus sequence of the promoter of the spo6 gene. In Schizosaccharomyces pombe (strain 972 / ATCC 24843) (Fission yeast), this protein is Meiosis-specific transcription factor mei4 (mei4).